Consider the following 347-residue polypeptide: Protein FAM50 homolog (347 aa).

Residues 77–113 (EDIVREREKKLAQKKEEKDREKLKALEAKQAEKDRQR) are compositionally biased toward basic and acidic residues. Residues 77 to 142 (EDIVREREKK…EDEEEPLEIK (66 aa)) form a disordered region. Acidic residues predominate over residues 123–138 (PEEDEESFDDEDEEEP).

Belongs to the FAM50 family.

In Aedes aegypti (Yellowfever mosquito), this protein is Protein FAM50 homolog.